The primary structure comprises 825 residues: Lon protease (825 aa).

The Lon N-terminal domain occupies 41–237 (LPIIFIPNTI…KVIQLLLEQK (197 aa)). Residue 388–395 (GPPGTGKT) coordinates ATP. In terms of domain architecture, Lon proteolytic spans 625–805 (SNPPGVVTGL…DEVLYEALGL (181 aa)). Catalysis depends on residues serine 711 and lysine 754.

It belongs to the peptidase S16 family. Homohexamer. Organized in a ring with a central cavity.

The protein resides in the cytoplasm. The enzyme catalyses Hydrolysis of proteins in presence of ATP.. In terms of biological role, ATP-dependent serine protease that mediates the selective degradation of mutant and abnormal proteins as well as certain short-lived regulatory proteins. Required for cellular homeostasis and for survival from DNA damage and developmental changes induced by stress. Degrades polypeptides processively to yield small peptide fragments that are 5 to 10 amino acids long. Binds to DNA in a double-stranded, site-specific manner. This is Lon protease from Methanosphaera stadtmanae (strain ATCC 43021 / DSM 3091 / JCM 11832 / MCB-3).